Consider the following 119-residue polypeptide: Evasin P983 (119 aa).

Residues 1–21 (MKASFCVIASCLVVFALKGTA) form the signal peptide. Intrachain disulfides connect C37–C59, C55–C97, C72–C102, and C92–C111. N-linked (GlcNAc...) asparagine glycans are attached at residues N48 and N67.

The protein resides in the secreted. Functionally, salivary chemokine-binding protein which binds to host chemokines CCL2, CCL3 and CCL8. The sequence is that of Evasin P983 from Amblyomma cajennense (Cayenne tick).